A 292-amino-acid polypeptide reads, in one-letter code: 33 kDa chaperonin (292 aa).

2 cysteine pairs are disulfide-bonded: Cys230–Cys232 and Cys263–Cys266.

Belongs to the HSP33 family. In terms of processing, under oxidizing conditions two disulfide bonds are formed involving the reactive cysteines. Under reducing conditions zinc is bound to the reactive cysteines and the protein is inactive.

Its subcellular location is the cytoplasm. Functionally, redox regulated molecular chaperone. Protects both thermally unfolding and oxidatively damaged proteins from irreversible aggregation. Plays an important role in the bacterial defense system toward oxidative stress. The sequence is that of 33 kDa chaperonin from Shigella dysenteriae serotype 1 (strain Sd197).